A 108-amino-acid chain; its full sequence is FK506-binding protein 1 (108 aa).

The region spanning 20 to 108 (GDAVTIHYVG…VFDVELLGIN (89 aa)) is the PPIase FKBP-type domain.

This sequence belongs to the FKBP-type PPIase family. FKBP1 subfamily.

The protein resides in the cytoplasm. The enzyme catalyses [protein]-peptidylproline (omega=180) = [protein]-peptidylproline (omega=0). Inhibited by both FK506 and rapamycin. In terms of biological role, PPIases accelerate the folding of proteins. It catalyzes the cis-trans isomerization of proline imidic peptide bonds in oligopeptides. This chain is FK506-binding protein 1 (FPR1), found in Yarrowia lipolytica (strain CLIB 122 / E 150) (Yeast).